We begin with the raw amino-acid sequence, 595 residues long: Mitoguardin 1 (595 aa).

A run of 2 helical transmembrane segments spans residues 11 to 31 and 38 to 58; these read LPIK…YYSL and TGTK…IIIA.

Belongs to the mitoguardin family. Homodimer and heterodimer; forms heterodimers with miga2.

It is found in the mitochondrion outer membrane. In terms of biological role, regulator of mitochondrial fusion: acts by forming homo- and heterodimers at the mitochondrial outer membrane and facilitating the formation of pld6/MitoPLD dimers. May act by regulating phospholipid metabolism via pld6/MitoPLD. The protein is Mitoguardin 1 of Danio rerio (Zebrafish).